The following is a 78-amino-acid chain: Acyl carrier protein (78 aa).

The Carrier domain occupies 1–76 (MSVAEKVKEI…DAISFIEKKK (76 aa)). S36 carries the O-(pantetheine 4'-phosphoryl)serine modification.

Belongs to the acyl carrier protein (ACP) family. In terms of processing, 4'-phosphopantetheine is transferred from CoA to a specific serine of apo-ACP by AcpS. This modification is essential for activity because fatty acids are bound in thioester linkage to the sulfhydryl of the prosthetic group.

It localises to the cytoplasm. The protein operates within lipid metabolism; fatty acid biosynthesis. Carrier of the growing fatty acid chain in fatty acid biosynthesis. This is Acyl carrier protein from Solidesulfovibrio magneticus (strain ATCC 700980 / DSM 13731 / RS-1) (Desulfovibrio magneticus).